A 1224-amino-acid polypeptide reads, in one-letter code: Serine/threonine-protein kinase CST20 (1224 aa).

The span at 1 to 18 (MSILSENNPTPTSITDPN) shows a compositional bias: polar residues. Disordered stretches follow at residues 1-378 (MSIL…TAHN) and 403-464 (TNSS…HSQE). Low complexity-rich tracts occupy residues 57-70 (NTTSANTSSLSLGS) and 95-119 (DSGSGDIDDSQQSHNNNNNESNPES). The span at 144–155 (HQGDDSDNEKQY) shows a compositional bias: basic and acidic residues. 3 stretches are compositionally biased toward polar residues: residues 169–191 (DSYSLGTLESPGTLNALETNNVS), 201–218 (TSSLEDLSLSLQHQNENA), and 231–240 (PTSKTSSFHD). A compositionally biased stretch (low complexity) spans 242–251 (SSVISSSTSV). Composition is skewed to polar residues over residues 256 to 271 (SNPTSTRGSHLSSYKS) and 305 to 324 (DTLSSATNSPNLLRNDTLQG). Low complexity-rich tracts occupy residues 343-375 (NTSATSRNTSGTSTSTVVKNSRSGTSKSTSTST) and 433-462 (KVRGVFSSMFGKNKSTSSSSSSNSGSNSHS). The region spanning 469–482 (ISTPFNAKHLAHVG) is the CRIB domain. 2 disordered regions span residues 539–825 (FHFD…ALAD) and 861–913 (LREK…KQAA). Residues 544–555 (NKSSSSGWSNEN) are compositionally biased toward polar residues. The span at 564–575 (SNSGSGSGGGGA) shows a compositional bias: gly residues. Residues 598–607 (ITPSQSMPTK) are compositionally biased toward polar residues. The span at 608 to 622 (TESKQSENQHPHEDN) shows a compositional bias: basic and acidic residues. The segment covering 623–636 (ATQYTPRTPTSHVQ) has biased composition (polar residues). Composition is skewed to low complexity over residues 664–677 (PSSQSLPRSDSQSD), 690–704 (SPSKIKIRSISSKSL), and 730–743 (SIPKSKSHSASLSS). Positions 744–755 (QLRPATNGSTTA) are enriched in polar residues. Positions 783-801 (APPPPPSAPPAPPVPPAPP) are enriched in pro residues. A compositionally biased stretch (polar residues) spans 805-820 (LSEQTSEIPQQRTAPS). Over residues 861-870 (LREKNERQNR) the composition is skewed to basic and acidic residues. Over residues 871–886 (QQETGQNNADTASGGS) the composition is skewed to polar residues. A Protein kinase domain is found at 947–1199 (YVDLVKIGQG…ADELLHDNFI (253 aa)). ATP-binding positions include 953–961 (IGQGASGGV) and lysine 977. Aspartate 1067 (proton acceptor) is an active-site residue.

It belongs to the protein kinase superfamily. STE Ser/Thr protein kinase family. STE20 subfamily.

The protein resides in the cytoplasm. The protein localises to the nucleus. The enzyme catalyses L-seryl-[protein] + ATP = O-phospho-L-seryl-[protein] + ADP + H(+). It carries out the reaction L-threonyl-[protein] + ATP = O-phospho-L-threonyl-[protein] + ADP + H(+). Its function is as follows. MAP4K component of the MAPK pathway required for the mating pheromone response, and the regulation of cell polarity and cell cycle. Phosphorylates histone H2B to form H2BS10ph. Required for hyphal formation and virulence. The sequence is that of Serine/threonine-protein kinase CST20 (CST20) from Candida albicans (strain WO-1) (Yeast).